Reading from the N-terminus, the 138-residue chain is ATP synthase epsilon chain (138 aa).

This sequence belongs to the ATPase epsilon chain family. As to quaternary structure, F-type ATPases have 2 components, CF(1) - the catalytic core - and CF(0) - the membrane proton channel. CF(1) has five subunits: alpha(3), beta(3), gamma(1), delta(1), epsilon(1). CF(0) has three main subunits: a, b and c.

The protein localises to the cell membrane. Its function is as follows. Produces ATP from ADP in the presence of a proton gradient across the membrane. In Streptococcus equi subsp. zooepidemicus (strain H70), this protein is ATP synthase epsilon chain.